Reading from the N-terminus, the 381-residue chain is MKIAIVEDDINMRKSLELFFELQDDLEIVSFKNPKDALAKLDESFDLVITDINMPHMDGLEFLRLLEGKYESIVITGNATLNKAIDSIRLGVKDFFQKPFKPELLLESIYRTKKVLEFQKKHPLEKPLKKPHKHSFLAASKALEESKRQALKVASTDANVMLLGESGVGKEVFAHFIHQHSQRSKHPFIAINMSAIPEHLLESELFGYQKGAFTDATAPKMGLFESANKGTIFLDEIAEMPLQLQSKLLRVVQEKEITRLGDNKSVKIDVRFISATNANMKEKIAAKEFREDLFFRLQIVPITIAPLRERVEEILPIAEIKLKEVCDAYHLGPKSFSKNAAKCLLEYSWHGNVRELLGVVERAAILSEETEIQEKDLFLER.

A Response regulatory domain is found at 2–113; that stretch reads KIAIVEDDIN…LLLESIYRTK (112 aa). Asp51 is subject to 4-aspartylphosphate. Positions 136–365 constitute a Sigma-54 factor interaction domain; it reads FLAASKALEE…LLGVVERAAI (230 aa). Residues 164–171 and 227–236 each bind ATP; these read GESGVGKE and ANKGTIFLDE.

Phosphorylated by FlgS.

Member of the two-component regulatory system FlgR/FlgS that induces the transcriptional induction of the genes needed in motility and flagellar biogenesis. Upon phosphorylation by FlgS, functions as a transcriptional regulator and activates transcription of RpoN-dependent flagellar genes. The protein is Transcriptional regulatory protein FlgR (flgR) of Helicobacter pylori (strain ATCC 700392 / 26695) (Campylobacter pylori).